Here is a 227-residue protein sequence, read N- to C-terminus: Ribonuclease 3 (227 aa).

The 123-residue stretch at 5–127 (LNALQLRLQH…LIGAVYLDAG (123 aa)) folds into the RNase III domain. Residue E40 participates in Mg(2+) binding. Residue D44 is part of the active site. Mg(2+) is bound by residues D113 and E116. Residue E116 is part of the active site. In terms of domain architecture, DRBM spans 154–224 (DAKTALQEWL…ATAMLELLKA (71 aa)).

It belongs to the ribonuclease III family. As to quaternary structure, homodimer. The cofactor is Mg(2+).

The protein localises to the cytoplasm. The catalysed reaction is Endonucleolytic cleavage to 5'-phosphomonoester.. Digests double-stranded RNA. Involved in the processing of primary rRNA transcript to yield the immediate precursors to the large and small rRNAs (23S and 16S). Processes some mRNAs, and tRNAs when they are encoded in the rRNA operon. Processes pre-crRNA and tracrRNA of type II CRISPR loci if present in the organism. The sequence is that of Ribonuclease 3 from Delftia acidovorans (strain DSM 14801 / SPH-1).